The primary structure comprises 512 residues: Rab11 family-interacting protein 2 (512 aa).

The region spanning 1 to 120 (MMLSEQAQKW…DKQRRKTEWF (120 aa)) is the C2 domain. The segment at 15–102 (VQVTVLQAKD…GLDKFLGQVA (88 aa)) is necessary for its cellular translocation to the plasma membrane. 2 disordered regions span residues 174–231 (RKSD…MSDL) and 263–287 (PESG…NQPG). 2 stretches are compositionally biased toward polar residues: residues 221-231 (RLSSAHSMSDL) and 277-287 (SFDTSKLNQPG). Serine 227 is subject to Phosphoserine; by MARK2. The residue at position 277 (serine 277) is a Phosphoserine. An NPF 1 motif is present at residues 323–325 (NPF). Residues 347-374 (KESKREKREKVSLFERVTGKRDSRRPDK) are compositionally biased toward basic and acidic residues. The segment at 347-390 (KESKREKREKVSLFERVTGKRDSRRPDKLNNGGSDSPCDLKSPS) is disordered. Short sequence motifs (NPF) lie at residues 406–408 (NPF) and 440–442 (NPF). The FIP-RBD domain occupies 437–499 (PDNNPFDATA…EETPSILRVP (63 aa)). Residues 465–512 (ELLRRKDTHIRELEDYIDNLLVRVMEETPSILRVPYEPSRKAGKFTNS) form a necessary for interaction with AP2A1, RAB11A, subcellular location, endocytosis activity and homooligomerization region.

Homooligomerizes in a Rab11-independent manner. Forms a heterooligomeric complex with RAB11FIP4. Interacts with AP2A1, MYO5B, RAB25 and REPS1. Interacts with RAB11A and RAB11B (activated GTP-bound form). Interacts with NPC1L1. Interacts (via NPF motifs) with EHD1 and EHD3. Interacts with TICAM2; this interaction directs RAB11FIP2 to the phagosome. Interacts with RAB14 and RAB25 (GTP-bound forms). Phosphorylation at Ser-227 by MARK2 regulates epithelial cell polarity.

The protein localises to the cell membrane. The protein resides in the recycling endosome membrane. Functionally, a Rab11 effector binding preferentially phosphatidylinositol 3,4,5-trisphosphate (PtdInsP3) and phosphatidic acid (PA) and acting in the regulation of the transport of vesicles from the endosomal recycling compartment (ERC) to the plasma membrane. Involved in insulin granule exocytosis. Also involved in receptor-mediated endocytosis and membrane trafficking of recycling endosomes, probably originating from clathrin-coated vesicles. Required in a complex with MYO5B and RAB11 for the transport of NPC1L1 to the plasma membrane. Also acts as a regulator of cell polarity. Plays an essential role in phagocytosis through a mechanism involving TICAM2, RAC1 and CDC42 Rho GTPases for controlling actin-dynamics. This Mus musculus (Mouse) protein is Rab11 family-interacting protein 2 (Rab11fip2).